A 192-amino-acid polypeptide reads, in one-letter code: Lipid A acyltransferase PagP (192 aa).

The first 24 residues, 1 to 24 (MWLRFCAPALMAWYWVFFPSTSQA), serve as a signal peptide directing secretion. Residues His-63, Asp-106, and Ser-107 contribute to the active site.

It belongs to the lipid A palmitoyltransferase family. As to quaternary structure, homodimer.

It is found in the cell outer membrane. The catalysed reaction is a lipid A + a 1,2-diacyl-sn-glycero-3-phosphocholine = a hepta-acyl lipid A + a 2-acyl-sn-glycero-3-phosphocholine. It carries out the reaction a lipid IVA + a 1,2-diacyl-sn-glycero-3-phosphocholine = a lipid IVB + a 2-acyl-sn-glycero-3-phosphocholine. It catalyses the reaction a lipid IIA + a 1,2-diacyl-sn-glycero-3-phosphocholine = a lipid IIB + a 2-acyl-sn-glycero-3-phosphocholine. Its function is as follows. Transfers a fatty acid residue from the sn-1 position of a phospholipid to the N-linked hydroxyfatty acid chain on the proximal unit of lipid A or its precursors. In Musicola paradisiaca (strain Ech703) (Dickeya paradisiaca), this protein is Lipid A acyltransferase PagP.